Consider the following 262-residue polypeptide: Phosphatidylglycerol--prolipoprotein diacylglyceryl transferase (262 aa).

Helical transmembrane passes span 17–37 (LAIH…YALG), 57–77 (LIFY…VLFY), 95–115 (GGMS…LFAH), and 119–139 (LGFF…LAAG). Arg140 serves as a coordination point for a 1,2-diacyl-sn-glycero-3-phospho-(1'-sn-glycerol). 3 helical membrane-spanning segments follow: residues 173-193 (PSQL…LWWY), 200-220 (AGQV…LVEF), and 227-247 (FLGL…PMVL).

This sequence belongs to the Lgt family.

It is found in the cell inner membrane. The enzyme catalyses L-cysteinyl-[prolipoprotein] + a 1,2-diacyl-sn-glycero-3-phospho-(1'-sn-glycerol) = an S-1,2-diacyl-sn-glyceryl-L-cysteinyl-[prolipoprotein] + sn-glycerol 1-phosphate + H(+). It functions in the pathway protein modification; lipoprotein biosynthesis (diacylglyceryl transfer). Catalyzes the transfer of the diacylglyceryl group from phosphatidylglycerol to the sulfhydryl group of the N-terminal cysteine of a prolipoprotein, the first step in the formation of mature lipoproteins. The polypeptide is Phosphatidylglycerol--prolipoprotein diacylglyceryl transferase (Bordetella bronchiseptica (strain ATCC BAA-588 / NCTC 13252 / RB50) (Alcaligenes bronchisepticus)).